The following is a 301-amino-acid chain: MTLERDAAAQVAKVLSEALPYIRRFVGKTLVIKYGGNAMESEELKQGFARDIVLMKAVGINPVVVHGGGPQIGDLLKRLSIESHFIDGMRVTDTATMDVVEMVLGGQVNKSIVNLINQHGGSAIGLTGKDAGLIRAKKLKVTRQTPEMTQPEIIDIGHVGEVTGVNTELLNMLVQGDFIPVIAPIGVGPDGESYNINADLVAGKVAEALKAEKLMLLTNIAGLLDKQGEVLTGLTTEQVDGLIADGTIYGGMLPKIRCALEAVQGGVHSAHIVDGRVPNAVLLEIFTDSGVGTLITNRKRH.

Residues 68 to 69 (GG), R90, and N195 each bind substrate.

It belongs to the acetylglutamate kinase family. ArgB subfamily.

It is found in the cytoplasm. It catalyses the reaction N-acetyl-L-glutamate + ATP = N-acetyl-L-glutamyl 5-phosphate + ADP. The protein operates within amino-acid biosynthesis; L-arginine biosynthesis; N(2)-acetyl-L-ornithine from L-glutamate: step 2/4. Catalyzes the ATP-dependent phosphorylation of N-acetyl-L-glutamate. This chain is Acetylglutamate kinase, found in Ectopseudomonas mendocina (strain ymp) (Pseudomonas mendocina).